Reading from the N-terminus, the 102-residue chain is Large ribosomal subunit protein uL24 (102 aa).

Belongs to the universal ribosomal protein uL24 family. As to quaternary structure, part of the 50S ribosomal subunit.

In terms of biological role, one of two assembly initiator proteins, it binds directly to the 5'-end of the 23S rRNA, where it nucleates assembly of the 50S subunit. Functionally, one of the proteins that surrounds the polypeptide exit tunnel on the outside of the subunit. This Burkholderia mallei (strain NCTC 10229) protein is Large ribosomal subunit protein uL24.